Here is an 841-residue protein sequence, read N- to C-terminus: Homeobox-leucine zipper protein ATHB-9 (841 aa).

Over residues 1–18 (MMAHHSMDDRDSPDKGFD) the composition is skewed to basic and acidic residues. The segment at 1 to 21 (MMAHHSMDDRDSPDKGFDSGK) is disordered. Positions 18–81 (DSGKYVRYTP…NRRCREKQRK (64 aa)) form a DNA-binding region, homeobox. Positions 85–118 (RLQTVNRKLSAMNKLLMEENDRLQKQVSNLVYEN) form a coiled coil. 2 disordered regions span residues 140-162 (VVVSGQQRQQQNPTHQHPQRDVN) and 602-630 (DQKTNPNDHQSASRTRDLASSLDGSTKTD). The span at 145–155 (QQRQQQNPTHQ) shows a compositional bias: low complexity. The START domain maps to 160–388 (DVNNPANLLS…IAQETSGEVQ (229 aa)). Positions 603–614 (QKTNPNDHQSAS) are enriched in polar residues.

The protein belongs to the HD-ZIP homeobox family. Class III subfamily. Binds DNA as homodimer. Interacts with ESR1 and ESR2. Interacts with ZPR3.

The protein localises to the nucleus. Its function is as follows. Probable transcription factor involved in the determination of adaxial-abaxial polarity in ovule primordium. Specifies adaxial leaf fates. Binds to the DNA sequence 5'-GTAAT[GC]ATTAC-3'. In Arabidopsis thaliana (Mouse-ear cress), this protein is Homeobox-leucine zipper protein ATHB-9 (ATHB-9).